Here is a 159-residue protein sequence, read N- to C-terminus: Cyclic pyranopterin monophosphate synthase (159 aa).

Substrate contacts are provided by residues 75 to 77 and 113 to 114; these read LCH and ME. D128 is a catalytic residue.

Belongs to the MoaC family. As to quaternary structure, homohexamer; trimer of dimers.

It carries out the reaction (8S)-3',8-cyclo-7,8-dihydroguanosine 5'-triphosphate = cyclic pyranopterin phosphate + diphosphate. It functions in the pathway cofactor biosynthesis; molybdopterin biosynthesis. In terms of biological role, catalyzes the conversion of (8S)-3',8-cyclo-7,8-dihydroguanosine 5'-triphosphate to cyclic pyranopterin monophosphate (cPMP). In Cereibacter sphaeroides (strain ATCC 17023 / DSM 158 / JCM 6121 / CCUG 31486 / LMG 2827 / NBRC 12203 / NCIMB 8253 / ATH 2.4.1.) (Rhodobacter sphaeroides), this protein is Cyclic pyranopterin monophosphate synthase.